We begin with the raw amino-acid sequence, 250 residues long: ATP synthase subunit a (250 aa).

The next 6 helical transmembrane spans lie at 26-46 (FTNASLFMAASAAVAAGFLYF), 84-104 (FFPLVFSLFMFVLTANLLGMF), 114-134 (IIVTFALAILVISTVLIYGFY), 143-163 (VFVPSGVPGILLPLVVAIEII), 193-213 (FVASLGALGAVGVGGAVLPLI), and 216-236 (VALTGLEFLVAFLQAYVFAVL).

Belongs to the ATPase A chain family. In terms of assembly, F-type ATPases have 2 components, CF(1) - the catalytic core - and CF(0) - the membrane proton channel. CF(1) has five subunits: alpha(3), beta(3), gamma(1), delta(1), epsilon(1). CF(0) has three main subunits: a(1), b(2) and c(9-12). The alpha and beta chains form an alternating ring which encloses part of the gamma chain. CF(1) is attached to CF(0) by a central stalk formed by the gamma and epsilon chains, while a peripheral stalk is formed by the delta and b chains.

The protein resides in the cell inner membrane. Key component of the proton channel; it plays a direct role in the translocation of protons across the membrane. This is ATP synthase subunit a from Rhizobium etli (strain ATCC 51251 / DSM 11541 / JCM 21823 / NBRC 15573 / CFN 42).